Consider the following 381-residue polypeptide: 1-deoxy-D-xylulose 5-phosphate reductoisomerase (381 aa).

8 residues coordinate NADPH: threonine 10, glycine 11, serine 12, isoleucine 13, glycine 36, lysine 37, asparagine 38, and asparagine 122. Lysine 123 contributes to the 1-deoxy-D-xylulose 5-phosphate binding site. Glutamate 124 provides a ligand contact to NADPH. Aspartate 148 is a binding site for Mn(2+). 1-deoxy-D-xylulose 5-phosphate contacts are provided by serine 149, glutamate 150, serine 173, and histidine 196. Position 150 (glutamate 150) interacts with Mn(2+). Glycine 202 lines the NADPH pocket. Serine 209, asparagine 214, lysine 215, and glutamate 218 together coordinate 1-deoxy-D-xylulose 5-phosphate. Glutamate 218 is a binding site for Mn(2+).

This sequence belongs to the DXR family. The cofactor is Mg(2+). Requires Mn(2+) as cofactor.

It carries out the reaction 2-C-methyl-D-erythritol 4-phosphate + NADP(+) = 1-deoxy-D-xylulose 5-phosphate + NADPH + H(+). It participates in isoprenoid biosynthesis; isopentenyl diphosphate biosynthesis via DXP pathway; isopentenyl diphosphate from 1-deoxy-D-xylulose 5-phosphate: step 1/6. In terms of biological role, catalyzes the NADPH-dependent rearrangement and reduction of 1-deoxy-D-xylulose-5-phosphate (DXP) to 2-C-methyl-D-erythritol 4-phosphate (MEP). The sequence is that of 1-deoxy-D-xylulose 5-phosphate reductoisomerase from Desulfitobacterium hafniense (strain Y51).